Consider the following 75-residue polypeptide: uncharacterized protein (75 aa).

This is an uncharacterized protein from Equus caballus (Horse).